The primary structure comprises 184 residues: Large ribosomal subunit protein uL6 (184 aa).

This sequence belongs to the universal ribosomal protein uL6 family. In terms of assembly, part of the 50S ribosomal subunit.

In terms of biological role, this protein binds to the 23S rRNA, and is important in its secondary structure. It is located near the subunit interface in the base of the L7/L12 stalk, and near the tRNA binding site of the peptidyltransferase center. This is Large ribosomal subunit protein uL6 from Thermosipho africanus (strain TCF52B).